We begin with the raw amino-acid sequence, 81 residues long: Photosystem I iron-sulfur center (81 aa).

4Fe-4S ferredoxin-type domains follow at residues 2–31 and 39–68; these read AHSV…MIPW and IASA…VRVY. [4Fe-4S] cluster is bound by residues cysteine 11, cysteine 14, cysteine 17, cysteine 21, cysteine 48, cysteine 51, cysteine 54, and cysteine 58.

In terms of assembly, the eukaryotic PSI reaction center is composed of at least 11 subunits. Requires [4Fe-4S] cluster as cofactor.

It is found in the plastid. Its subcellular location is the chloroplast thylakoid membrane. The catalysed reaction is reduced [plastocyanin] + hnu + oxidized [2Fe-2S]-[ferredoxin] = oxidized [plastocyanin] + reduced [2Fe-2S]-[ferredoxin]. Its function is as follows. Apoprotein for the two 4Fe-4S centers FA and FB of photosystem I (PSI); essential for photochemical activity. FB is the terminal electron acceptor of PSI, donating electrons to ferredoxin. The C-terminus interacts with PsaA/B/D and helps assemble the protein into the PSI complex. Required for binding of PsaD and PsaE to PSI. PSI is a plastocyanin-ferredoxin oxidoreductase, converting photonic excitation into a charge separation, which transfers an electron from the donor P700 chlorophyll pair to the spectroscopically characterized acceptors A0, A1, FX, FA and FB in turn. The chain is Photosystem I iron-sulfur center from Staurastrum punctulatum (Green alga).